Here is a 368-residue protein sequence, read N- to C-terminus: Large ribosomal subunit protein bL27m (368 aa).

Residues methionine 1 to threonine 20 constitute a mitochondrion transit peptide. Residues lysine 23–lysine 44 are disordered. Positions serine 31–lysine 44 are enriched in basic and acidic residues.

The protein belongs to the bacterial ribosomal protein bL27 family.

It localises to the mitochondrion. In terms of biological role, component of the large subunit of mitochondrial ribosome. The protein is Large ribosomal subunit protein bL27m (MRPL2) of Candida glabrata (strain ATCC 2001 / BCRC 20586 / JCM 3761 / NBRC 0622 / NRRL Y-65 / CBS 138) (Yeast).